Reading from the N-terminus, the 62-residue chain is Translational regulator CsrA (62 aa).

This sequence belongs to the CsrA/RsmA family. Homodimer; the beta-strands of each monomer intercalate to form a hydrophobic core, while the alpha-helices form wings that extend away from the core.

Its subcellular location is the cytoplasm. Functionally, a key translational regulator that binds mRNA to regulate translation initiation and/or mRNA stability. Mediates global changes in gene expression, shifting from rapid growth to stress survival by linking envelope stress, the stringent response and the catabolite repression systems. Usually binds in the 5'-UTR; binding at or near the Shine-Dalgarno sequence prevents ribosome-binding, repressing translation, binding elsewhere in the 5'-UTR can activate translation and/or stabilize the mRNA. Its function is antagonized by small RNA(s). The protein is Translational regulator CsrA of Pasteurella multocida (strain Pm70).